A 778-amino-acid polypeptide reads, in one-letter code: Beta-phellandrene synthase (neryl-diphosphate-cyclizing), chloroplastic (778 aa).

A chloroplast-targeting transit peptide spans 1 to 36; sequence MIVGYRSTIITLSHPKLGNGKTISSNAIFQRSCRVR. Mg(2+)-binding residues include Asp-531, Asn-676, and Glu-684. The DDXXD motif signature appears at 531–535; that stretch reads DDHFE.

The protein belongs to the terpene synthase family. Tpse subfamily. It depends on Mg(2+) as a cofactor. Trichomes.

The protein localises to the plastid. Its subcellular location is the chloroplast. The catalysed reaction is neryl diphosphate = beta-phellandrene + diphosphate. In terms of biological role, monoterpene synthase catalyzing the production of beta-phellandrene from neryl diphosphate. Also produces lower amounts of delta-2-carene, alpha-phellandrene and limonene. When incubated in vitro with geranyl diphosphate, catalyzes the formation of acyclic myrcene and ocimene as major products in addition to beta-phellandrene. The sequence is that of Beta-phellandrene synthase (neryl-diphosphate-cyclizing), chloroplastic (PHS1) from Solanum lycopersicum (Tomato).